We begin with the raw amino-acid sequence, 210 residues long: Dynein regulatory complex protein 12 (210 aa).

The disordered stretch occupies residues 1 to 23 (MPPKNKEKGKKSGAQKKKKNWGA). Over residues 7–20 (EKGKKSGAQKKKKN) the composition is skewed to basic residues. A coiled-coil region spans residues 49–161 (RDEARRAKAS…EAKYEEILHD (113 aa)). The interval 188-210 (HKEQQRQFGLTPPGSLRPPAPSL) is disordered.

It belongs to the DRC12 family. Component of the nexin-dynein regulatory complex (N-DRC).

It is found in the cytoplasm. The protein resides in the cytoskeleton. It localises to the flagellum axoneme. Functionally, component of the nexin-dynein regulatory complex (N-DRC), a key regulator of ciliary/flagellar motility which maintains the alignment and integrity of the distal axoneme and regulates microtubule sliding in motile axonemes. The protein is Dynein regulatory complex protein 12 of Homo sapiens (Human).